A 745-amino-acid polypeptide reads, in one-letter code: Mitogen-activated protein kinase kinase kinase zak-1 (745 aa).

The Protein kinase domain maps to 31–305 (IQVGDHIGVG…KVMDECEKFM (275 aa)). Residues 37–45 (IGVGTFGAV) and Lys63 contribute to the ATP site. Asp159 functions as the Proton acceptor in the catalytic mechanism. Positions 307-352 (LEDWKTEIEKQEKNVEKMRKDLEKRREQLEIREKALKQRMKVEQAV) form a coiled coil. The 73-residue stretch at 366–438 (WSEHHTSHWV…MKMIRKLADT (73 aa)) folds into the SAM domain. A disordered region spans residues 693–745 (LTRRRRTTTTNSEDTEKSDTNNKTPESQARRVHVHGGKDKWNWKKGKSRPKFT). Over residues 735–745 (WKKGKSRPKFT) the composition is skewed to basic residues.

It belongs to the protein kinase superfamily. STE Ser/Thr protein kinase family. MAP kinase kinase kinase subfamily. Mg(2+) serves as cofactor. As to expression, widely expressed; expressed in most tissues, including intestines, muscle and the nervous system.

Its subcellular location is the cytoplasm. It is found in the nucleus. It carries out the reaction L-seryl-[protein] + ATP = O-phospho-L-seryl-[protein] + ADP + H(+). The catalysed reaction is L-threonyl-[protein] + ATP = O-phospho-L-threonyl-[protein] + ADP + H(+). In terms of biological role, stress-activated component of a protein kinase signal transduction cascade that promotes programmed cell death in response to ribotoxic stress. Acts as the proximal sensor of ribotoxic stress: directly binds to the ribosome, thereby acting as a sentinel for colliding ribosomes. Upon ribosome collisions, activates the stress-activated protein kinase signal transduction cascade, leading to programmed cell death. Acts by catalyzing phosphorylation of MAP kinase kinases, leading to activation of the JNK and MAP kinase p38 pathways. In Caenorhabditis elegans, this protein is Mitogen-activated protein kinase kinase kinase zak-1.